The following is a 453-amino-acid chain: MSPQTETKAGVGFKAGVKEYKLTYYTPEYETKDTDILAAFRVTPQPGVPPEERGAAVAAESSTGTWTTVWTDGLTSLDRYKGRCYHIEPVPGEEEQFIAYVAYPLDLFEEGSVTNMFTSIVGNVFGFKALRALRLEDLRIPVAYVKTFQGPPHGIQVERDKLNKYGRPLLGCTIKPKLGLSAKNYGRAVYECLRGGLDFTKDDENVNSQPFMRWRDRFLFCAEAIYKSQAETGEIKGHYLNATAGTCEEMIKRAVFARELGVPIVMHDYLTGGFTANTTLSHYCRDNGLLLHIHRAMHAVIDRQKNHGMHFRVLAKALRMSGGDHIHSGTVVGKLEGERDITLGFVDLLRDDYIEKDRSRGIYFTQDWVSLPGVIPVASRGIHVWHMPALTEIFGDDSVLQFGGGTLGHPWGNAPGAVANRVALEACVKARNEGRDLAAEGGEIIREACKWSP.

Positions 1–2 (MS) are excised as a propeptide. N-acetylproline is present on proline 3. Position 14 is an N6,N6,N6-trimethyllysine (lysine 14). Substrate contacts are provided by asparagine 123 and threonine 173. Catalysis depends on lysine 175, which acts as the Proton acceptor. Lysine 177 is a binding site for substrate. Positions 201, 203, and 204 each coordinate Mg(2+). Lysine 201 bears the N6-carboxylysine mark. Catalysis depends on histidine 294, which acts as the Proton acceptor. Residues arginine 295, histidine 327, and serine 379 each coordinate substrate.

The protein belongs to the RuBisCO large chain family. Type I subfamily. Heterohexadecamer of 8 large chains and 8 small chains; disulfide-linked. The disulfide link is formed within the large subunit homodimers. Requires Mg(2+) as cofactor. Post-translationally, the disulfide bond which can form in the large chain dimeric partners within the hexadecamer appears to be associated with oxidative stress and protein turnover.

Its subcellular location is the plastid. The protein localises to the chloroplast. The enzyme catalyses 2 (2R)-3-phosphoglycerate + 2 H(+) = D-ribulose 1,5-bisphosphate + CO2 + H2O. It catalyses the reaction D-ribulose 1,5-bisphosphate + O2 = 2-phosphoglycolate + (2R)-3-phosphoglycerate + 2 H(+). Functionally, ruBisCO catalyzes two reactions: the carboxylation of D-ribulose 1,5-bisphosphate, the primary event in carbon dioxide fixation, as well as the oxidative fragmentation of the pentose substrate in the photorespiration process. Both reactions occur simultaneously and in competition at the same active site. The protein is Ribulose bisphosphate carboxylase large chain of Cruciata glabra (Slender crosswort).